The primary structure comprises 326 residues: Probable 9-O-acetyl-N-acetylneuraminic acid deacetylase (326 aa).

Positions 1–21 (MNAIISPDYYYVLTVAGQSNA) are cleaved as a signal peptide.

Its subcellular location is the periplasm. Functionally, probably catalyzes the hydrolysis of the 9-O-acetyl group of 9-O-acetyl-N-acetylneuraminate (Neu5,9Ac2). Is required for growth of E.coli on Neu5,9Ac2, an alternative sialic acid commonly found in mammalian host mucosal sites, in particular in the human intestine. The protein is Probable 9-O-acetyl-N-acetylneuraminic acid deacetylase (nanS) of Escherichia coli (strain K12).